We begin with the raw amino-acid sequence, 235 residues long: MAAERSLWVVGLCPGSRLGRVVRVLLLLLWFAARGGALYFHIGETEKKCFIEEIPDETMVIGNYRTQLYDKQREEYQPATPGLGMFVEVKDPEDKVILARQYGSEGRFTFTSHTPGEHQICLHSNSTKFSLFAGGMLRVHLDIQVGEHANDYAEIAAKDKLSELQLRVRQLVEQVEQIQKEQNYQRWREERFRQTSESTNQRVLWWSILQTLILVAIGVWQMRHLKSFFEAKKLV.

Residues 1–37 form the signal peptide; that stretch reads MAAERSLWVVGLCPGSRLGRVVRVLLLLLWFAARGGA. The Lumenal segment spans residues 38-201; the sequence is LYFHIGETEK…FRQTSESTNQ (164 aa). Residues 47 to 145 enclose the GOLD domain; the sequence is KKCFIEEIPD…MLRVHLDIQV (99 aa). Positions 121 to 160 are required for interaction with STX17; that stretch reads CLHSNSTKFSLFAGGMLRVHLDIQVGEHANDYAEIAAKDK. The N-linked (GlcNAc...) asparagine glycan is linked to N125. The stretch at 154–184 forms a coiled coil; it reads EIAAKDKLSELQLRVRQLVEQVEQIQKEQNY. The residue at position 160 (K160) is an N6-acetyllysine. The helical transmembrane segment at 202 to 222 threads the bilayer; it reads RVLWWSILQTLILVAIGVWQM. At 223–235 the chain is on the cytoplasmic side; sequence RHLKSFFEAKKLV. The short motif at 228-229 is the COPII vesicle coat-binding element; sequence FF. The short motif at 228-235 is the COPI vesicle coat-binding element; the sequence is FFEAKKLV.

The protein belongs to the EMP24/GP25L family. As to quaternary structure, monomer and homodimer in endoplasmic reticulum. Predominantly monomeric and to lesser extent homodimeric in endoplasmic reticulum-Golgi intermediate compartment and cis-Golgi network. Probably oligomerizes with other members of the EMP24/GP25L family such as TMED2, TMED7 and TMED10. Interacts with TMED5. Interacts (via C-terminus) with COPG1; the interaction involves dimeric TMED9. Interacts with PTPN2 and SPAST. Interacts with STX17; the interaction is direct. N-linked glycosylated containing high mannose.

It is found in the endoplasmic reticulum membrane. It localises to the golgi apparatus. The protein localises to the cis-Golgi network membrane. The protein resides in the endoplasmic reticulum-Golgi intermediate compartment membrane. Its subcellular location is the trans-Golgi network membrane. In terms of biological role, appears to be involved in vesicular protein trafficking, mainly in the early secretory pathway. In COPI vesicle-mediated retrograde transport involved in the coatomer recruitment to membranes of the early secretory pathway. Increases coatomer-dependent activity of ARFGAP2. Thought to play a crucial role in the specific retention of p24 complexes in cis-Golgi membranes; specifically contributes to the coupled localization of TMED2 and TMED10 in the cis-Golgi network. May be involved in organization of intracellular membranes, such as of the ER-Golgi intermediate compartment and the Golgi apparatus. Involved in ER localization of PTPN2. The sequence is that of Transmembrane emp24 domain-containing protein 9 (TMED9) from Bos taurus (Bovine).